The following is a 297-amino-acid chain: 6-dehydroglucose reductase (297 aa).

Trp-20, Arg-21, and Asp-49 together coordinate NADP(+). The active-site Proton donor is the Tyr-54. 4 residues coordinate D-glucose: Tyr-54, Lys-98, His-129, and Arg-130. NADP(+)-binding residues include Ser-159, Asn-160, Gln-181, Ser-211, Leu-213, Gly-215, Gly-261, Thr-262, Asn-263, and Arg-267.

Belongs to the aldo/keto reductase family. As to quaternary structure, homotrimer.

It catalyses the reaction D-glucose + NADP(+) = 6-dehydro-D-glucose + NADPH + H(+). Part of the sulfoquinovose monooxygenase (sulfo-SMO) pathway, a D-sulfoquinovose degradation pathway that enables the complete utilization of all carbons within sulfoquinovose (SQ) with concomitant production of inorganic sulfite. Catalyzes the NADP-dependent reduction of 6-dehydro-D-glucose to D-glucose. Cannot use NADH. The sequence is that of 6-dehydroglucose reductase from Agrobacterium fabrum (strain C58 / ATCC 33970) (Agrobacterium tumefaciens (strain C58)).